The sequence spans 149 residues: Large ribosomal subunit protein uL24 (149 aa).

This sequence belongs to the universal ribosomal protein uL24 family. In terms of assembly, part of the 50S ribosomal subunit.

Functionally, one of two assembly initiator proteins, it binds directly to the 5'-end of the 23S rRNA, where it nucleates assembly of the 50S subunit. Located at the polypeptide exit tunnel on the outside of the subunit. In Hyperthermus butylicus (strain DSM 5456 / JCM 9403 / PLM1-5), this protein is Large ribosomal subunit protein uL24.